We begin with the raw amino-acid sequence, 407 residues long: uncharacterized protein (407 aa).

Helical transmembrane passes span 13 to 30 (IVFT…SPFL), 40 to 62 (VTPL…YYVL), 67 to 89 (ILGM…YNII), 118 to 140 (LAFA…VFSG), 147 to 169 (VYER…IRRL), 179 to 199 (AVGL…YYNY), 253 to 271 (WISG…SVFV), 281 to 303 (TEII…FGPL), 334 to 356 (GYLI…EIIA), 361 to 378 (AFAF…LVSF), and 385 to 402 (QFLV…IVLF).

The protein resides in the cell membrane. This is an uncharacterized protein from Aquifex aeolicus (strain VF5).